The following is a 274-amino-acid chain: Large ribosomal subunit protein uL2cz/uL2cy (274 aa).

Disordered stretches follow at residues 1–22 (MAIH…DSQV) and 225–274 (PVDH…RRSK).

This sequence belongs to the universal ribosomal protein uL2 family. Part of the 50S ribosomal subunit.

It localises to the plastid. The protein localises to the chloroplast. The chain is Large ribosomal subunit protein uL2cz/uL2cy (rpl2-A) from Nasturtium officinale (Watercress).